The primary structure comprises 604 residues: 3-hydroxy-3-methylglutaryl-coenzyme A reductase (604 aa).

Residues Met1–Gln31 form a disordered region. Transmembrane regions (helical) follow at residues Ala40–Val62 and Ala90–Val110. The segment at Gln111–Glu189 is linker. Positions Asp190–Ser604 are catalytic. Catalysis depends on Glu283, which acts as the Charge relay system. Asn347 carries N-linked (GlcNAc...) asparagine glycosylation. Lys415 (charge relay system) is an active-site residue. Asn460 carries an N-linked (GlcNAc...) asparagine glycan. Asp491 (charge relay system) is an active-site residue. His589 (proton donor) is an active-site residue. N-linked (GlcNAc...) asparagine glycosylation occurs at Asn593.

It belongs to the HMG-CoA reductase family. Found in protoplasts and leaves submitted to stress. Low levels found in apexes, anthers and roots.

It localises to the endoplasmic reticulum membrane. The catalysed reaction is (R)-mevalonate + 2 NADP(+) + CoA = (3S)-3-hydroxy-3-methylglutaryl-CoA + 2 NADPH + 2 H(+). Its pathway is metabolic intermediate biosynthesis; (R)-mevalonate biosynthesis; (R)-mevalonate from acetyl-CoA: step 3/3. In terms of biological role, catalyzes the synthesis of mevalonate, the specific precursor of all isoprenoid compounds present in plants. Possible role in plant defense mechanisms as well as in the cell cycle. This chain is 3-hydroxy-3-methylglutaryl-coenzyme A reductase (HMGR), found in Nicotiana sylvestris (Wood tobacco).